A 461-amino-acid polypeptide reads, in one-letter code: D-arabinono-1,4-lactone oxidase (461 aa).

Residues 24–194 (FSAISLGLRC…VDITISVVPA (171 aa)) enclose the FAD-binding PCMH-type domain. The residue at position 61 (H61) is a Pros-8alpha-FAD histidine.

Belongs to the oxygen-dependent FAD-linked oxidoreductase family. Requires FAD as cofactor.

The protein localises to the mitochondrion membrane. The catalysed reaction is D-arabinono-1,4-lactone + O2 = dehydro-D-arabinono-1,4-lactone + H2O2 + H(+). The protein operates within cofactor biosynthesis; D-erythroascorbate biosynthesis; dehydro-D-arabinono-1,4-lactone from D-arabinose: step 2/2. This is D-arabinono-1,4-lactone oxidase (alo1) from Schizosaccharomyces pombe (strain 972 / ATCC 24843) (Fission yeast).